The chain runs to 365 residues: Phospho-N-acetylmuramoyl-pentapeptide-transferase (365 aa).

10 helical membrane passes run 19 to 39 (TLLI…SSWA), 49 to 69 (LLIA…AVVP), 92 to 112 (AGTP…IAVV), 116 to 136 (FNPD…IGWV), 156 to 176 (LFLQ…YGPT), 183 to 203 (IMQF…FALV), 215 to 235 (VDGL…LLVA), 238 to 258 (NPAL…FVHH), 279 to 299 (LAAV…SGIF), and 345 to 365 (QIVG…MATA).

This sequence belongs to the glycosyltransferase 4 family. MraY subfamily. Mg(2+) is required as a cofactor.

The protein localises to the cell inner membrane. The catalysed reaction is UDP-N-acetyl-alpha-D-muramoyl-L-alanyl-gamma-D-glutamyl-meso-2,6-diaminopimeloyl-D-alanyl-D-alanine + di-trans,octa-cis-undecaprenyl phosphate = di-trans,octa-cis-undecaprenyl diphospho-N-acetyl-alpha-D-muramoyl-L-alanyl-D-glutamyl-meso-2,6-diaminopimeloyl-D-alanyl-D-alanine + UMP. Its pathway is cell wall biogenesis; peptidoglycan biosynthesis. Catalyzes the initial step of the lipid cycle reactions in the biosynthesis of the cell wall peptidoglycan: transfers peptidoglycan precursor phospho-MurNAc-pentapeptide from UDP-MurNAc-pentapeptide onto the lipid carrier undecaprenyl phosphate, yielding undecaprenyl-pyrophosphoryl-MurNAc-pentapeptide, known as lipid I. The chain is Phospho-N-acetylmuramoyl-pentapeptide-transferase from Synechocystis sp. (strain ATCC 27184 / PCC 6803 / Kazusa).